Here is a 217-residue protein sequence, read N- to C-terminus: Pre-mRNA-splicing factor sap62 (217 aa).

The Matrin-type zinc-finger motif lies at 54–84 (FECRLCLTTHANENSYLTHTQGKKHQTNLAR).

This sequence belongs to the SF3A2 family. Belongs to the 40S cdc5-associated complex (or cwf complex), a spliceosome sub-complex reminiscent of a late-stage spliceosome composed of the U2, U5 and U6 snRNAs and at least brr2, cdc5, cwf2/prp3, cwf3/syf1, cwf4/syf3, cwf5/ecm2, spp42/cwf6, cwf7/spf27, cwf8, cwf9, cwf10, cwf11, cwf12, prp45/cwf13, cwf14, cwf15, cwf16, cwf17, cwf18, cwf19, cwf20, cwf21, cwf22, cwf23, cwf24, cwf25, cwf26, cyp7/cwf27, cwf28, cwf29/ist3, lea1, msl1, prp5/cwf1, prp10, prp12/sap130, prp17, prp22, sap61, sap62, sap114, sap145, slu7, smb1, smd1, smd3, smf1, smg1 and syf2.

The protein resides in the nucleus. It localises to the cytoplasm. Functionally, involved in mRNA splicing where it associates with cdc5 and the other cwf proteins as part of the spliceosome. The polypeptide is Pre-mRNA-splicing factor sap62 (sap62) (Schizosaccharomyces pombe (strain 972 / ATCC 24843) (Fission yeast)).